A 392-amino-acid polypeptide reads, in one-letter code: Putative nickel insertion protein (392 aa).

The protein belongs to the LarC family.

The protein is Putative nickel insertion protein of Pelobacter propionicus (strain DSM 2379 / NBRC 103807 / OttBd1).